Reading from the N-terminus, the 172-residue chain is Protein sym-1 (172 aa).

5 consecutive transmembrane segments (helical) span residues 13-33 (PLLTQAVTTSILFGVGDVAAQ), 52-72 (MVLYGGAVFGPAATTWFRFLQ), 94-114 (GLFAPTFIGIFLGSMAVLEGT), 128-148 (LSTNWMVWPFVQMVNFKVVPL), and 152-172 (VLFVNVISIGWNCYLSWLNGQ).

The protein belongs to the peroxisomal membrane protein PXMP2/4 family.

It is found in the mitochondrion inner membrane. In terms of biological role, may be involved in cellular response to stress. Required to maintain mitochondrial DNA (mtDNA) integrity and stability. The chain is Protein sym-1 (sym-1) from Neurospora crassa (strain ATCC 24698 / 74-OR23-1A / CBS 708.71 / DSM 1257 / FGSC 987).